Here is a 232-residue protein sequence, read N- to C-terminus: Cysteine proteinase inhibitor 7 (232 aa).

The first 29 residues, 1 to 29, serve as a signal peptide directing secretion; that stretch reads MDMRRASMCMMLICVSLVLLSGFGQFVIC. 2 consecutive Cystatin domains span residues 46–135 and 152–214; these read GGFS…KNII and FDWR…ERGN. A Secondary area of contact motif is present at residues 91–95; the sequence is QVVAG. A Phosphoserine modification is found at S181.

This sequence belongs to the cystatin family. Phytocystatin subfamily.

The protein resides in the secreted. Its function is as follows. Specific inhibitor of cysteine proteinases. Probably involved in the regulation of endogenous processes and in defense against pests and pathogens. This chain is Cysteine proteinase inhibitor 7 (CYS7), found in Arabidopsis thaliana (Mouse-ear cress).